The primary structure comprises 118 residues: Disulfide bond formation protein (118 aa).

The N-terminal stretch at 1 to 27 (MRAKWLWMTAVGSLLITVLTAWGWAAA) is a signal peptide. One can recognise a Thioredoxin domain in the interval 28 to 114 (SSQDSKIVYV…VAEAVLRSFF (87 aa)). An intrachain disulfide couples cysteine 42 to cysteine 45.

Belongs to the thioredoxin family.

The protein resides in the secreted. In terms of biological role, stimulates the oxidation and reduction of disulfide bonds in vitro. This is Disulfide bond formation protein (bdb) from Brevibacillus choshinensis.